The following is a 427-amino-acid chain: Pectin acetylesterase 5 (427 aa).

The first 35 residues, 1 to 35, serve as a signal peptide directing secretion; it reads MAIPRFSSLLRCRKWAKSDWLVASIGCVLIVFFLS. Asparagine 173 carries an N-linked (GlcNAc...) asparagine glycan. Residues serine 209, aspartate 305, and histidine 372 each act as charge relay system in the active site. The N-linked (GlcNAc...) asparagine glycan is linked to asparagine 391.

It belongs to the pectinacetylesterase family.

It is found in the secreted. The protein resides in the cell wall. Functionally, hydrolyzes acetyl esters in homogalacturonan regions of pectin. In type I primary cell wall, galacturonic acid residues of pectin can be acetylated at the O-2 and O-3 positions. Decreasing the degree of acetylation of pectin gels in vitro alters their physical properties. The protein is Pectin acetylesterase 5 of Arabidopsis thaliana (Mouse-ear cress).